The following is a 1620-amino-acid chain: Probable serine/threonine-protein kinase gdt4 (1620 aa).

The N-terminal stretch at 1-19 (MKLEQRIFFLICLVINSFS) is a signal peptide. Residues 20-891 (NCSLLVAPDG…EVIGINEQLN (872 aa)) are Extracellular-facing. Residues 892–912 (ILAIVLPITISLFAAASILAG) traverse the membrane as a helical segment. The Cytoplasmic segment spans residues 913-1620 (YLVIKKYKKP…AKRNKKNQNQ (708 aa)). Positions 1349 to 1604 (IVLEKYLSEG…TLIDLLEKLL (256 aa)) constitute a Protein kinase domain. ATP is bound by residues 1355 to 1363 (LSEGSFGVV) and lysine 1376. The Proton acceptor role is filled by aspartate 1466.

The protein in the N-terminal section; belongs to the GDT family. It in the C-terminal section; belongs to the protein kinase superfamily. TKL Ser/Thr protein kinase family.

It is found in the membrane. It catalyses the reaction L-seryl-[protein] + ATP = O-phospho-L-seryl-[protein] + ADP + H(+). It carries out the reaction L-threonyl-[protein] + ATP = O-phospho-L-threonyl-[protein] + ADP + H(+). In Dictyostelium discoideum (Social amoeba), this protein is Probable serine/threonine-protein kinase gdt4 (gdt4).